Here is a 447-residue protein sequence, read N- to C-terminus: Beta-glucuronosyltransferase GlcAT14A (447 aa).

The Cytoplasmic segment spans residues 1–33 (MKKLRSYYSNVRHHQNHHHHHHHHSNIVSSERK). A helical; Signal-anchor for type II membrane protein transmembrane segment spans residues 34–54 (WIFFPLLIGSIFALFLLFLTT). Residues 55–447 (TLTSPTGGVR…TENFRSKQCK (393 aa)) are Lumenal-facing. N-linked (GlcNAc...) asparagine glycans are attached at residues asparagine 151, asparagine 200, asparagine 329, and asparagine 405.

This sequence belongs to the glycosyltransferase 14 family.

The protein localises to the golgi apparatus membrane. Functionally, beta-glucuronosyltransferase involved in the biosynthesis of type II arabinogalactan (AG). Modifies both the beta-1,6-linked galactan and beta-1,3-linked galactan present in type II AG. Transfers glucuronate to beta-1,6-galactooligosaccharides with degrees of polymerization ranging from 3 to 11. Transfers glucuronate to beta-1,3-galactooligosaccharides with degrees of polymerization ranging from 5 to 7. The addition of glucuronate at the O6 position may terminate galactose chain extension. Required for cell elongation during seedling growth. The sequence is that of Beta-glucuronosyltransferase GlcAT14A from Arabidopsis thaliana (Mouse-ear cress).